The following is a 192-amino-acid chain: Ion-translocating oxidoreductase complex subunit B (192 aa).

Positions Met-1–Ser-26 are hydrophobic. Positions Glu-32 to Val-91 constitute a 4Fe-4S domain. The [4Fe-4S] cluster site is built by Cys-49, Cys-52, Cys-57, Cys-74, Cys-117, Cys-120, Cys-123, Cys-127, Cys-147, Cys-150, Cys-153, and Cys-157. 2 consecutive 4Fe-4S ferredoxin-type domains span residues Met-108–Arg-137 and Val-138–Val-167.

The protein belongs to the 4Fe4S bacterial-type ferredoxin family. RnfB subfamily. As to quaternary structure, the complex is composed of six subunits: RsxA, RsxB, RsxC, RsxD, RsxE and RsxG. It depends on [4Fe-4S] cluster as a cofactor.

The protein localises to the cell inner membrane. Part of a membrane-bound complex that couples electron transfer with translocation of ions across the membrane. Required to maintain the reduced state of SoxR. This is Ion-translocating oxidoreductase complex subunit B from Shigella boydii serotype 4 (strain Sb227).